The sequence spans 538 residues: [Pyruvate dehydrogenase [acetyl-transferring]]-phosphatase 1, mitochondrial (538 aa).

The transit peptide at M1–Y71 directs the protein to the mitochondrion. A PPM-type phosphatase domain is found at V109 to F525. Residues D144 and G145 each coordinate Mn(2+). The residue at position 202 (K202) is an N6-acetyllysine. Mn(2+) is bound by residues D418 and D516.

The protein belongs to the PP2C family. As to quaternary structure, heterodimer of a catalytic (PDP1) and a regulatory (PDPR) subunit. It depends on Mn(2+) as a cofactor. Mg(2+) serves as cofactor.

The protein localises to the mitochondrion. The catalysed reaction is O-phospho-L-seryl-[pyruvate dehydrogenase E1 alpha subunit] + H2O = L-seryl-[pyruvate dehydrogenase E1 alpha subunit] + phosphate. With respect to regulation, magnesium-dependent and calcium-stimulated. PDP1 activity strongly depends on its Ca(2+)-dependent binding to the lipoyl domain of E2 subunit of component of the pyruvate dehydrogenase complex. Its function is as follows. Mitochondrial enzyme that catalyzes the dephosphorylation and concomitant reactivation of the alpha subunit of the E1 component of the pyruvate dehydrogenase complex (PDC), thereby stimulating the conversion of pyruvate into acetyl-CoA. This Bos taurus (Bovine) protein is [Pyruvate dehydrogenase [acetyl-transferring]]-phosphatase 1, mitochondrial (PDP1).